Consider the following 239-residue polypeptide: Orotidine 5'-phosphate decarboxylase (239 aa).

Substrate is bound by residues Asp10, Lys32, 59–68 (DLKLHDIPNT), Thr122, Arg184, Gln193, Gly213, and Arg214. The active-site Proton donor is the Lys61.

It belongs to the OMP decarboxylase family. Type 1 subfamily. In terms of assembly, homodimer.

It catalyses the reaction orotidine 5'-phosphate + H(+) = UMP + CO2. The protein operates within pyrimidine metabolism; UMP biosynthesis via de novo pathway; UMP from orotate: step 2/2. Catalyzes the decarboxylation of orotidine 5'-monophosphate (OMP) to uridine 5'-monophosphate (UMP). The polypeptide is Orotidine 5'-phosphate decarboxylase (Shouchella clausii (strain KSM-K16) (Alkalihalobacillus clausii)).